A 473-amino-acid chain; its full sequence is Photosystem II CP43 reaction center protein (473 aa).

The propeptide occupies 1-14 (MKTLYSLRRFYPVE). The residue at position 15 (Thr15) is an N-acetylthreonine. Residue Thr15 is modified to Phosphothreonine. A run of 5 helical transmembrane segments spans residues 69 to 93 (LFEVAHFVPEKPMYEQGLILLPHLA), 134 to 155 (LIGPETLEESLPFFGYVWKDRS), 178 to 200 (KALYFGGVYDTWAPGGGDVRKIT), 255 to 275 (KPFAWARRAFVWSGEAYLSYS), and 291 to 312 (WFNNTAYPSEFYGPTGPEASQA). Glu367 contributes to the [CaMn4O5] cluster binding site. The chain crosses the membrane as a helical span at residues 447 to 471 (RARAAAAGFEKGIDRDFEPVLSMNP).

This sequence belongs to the PsbB/PsbC family. PsbC subfamily. PSII is composed of 1 copy each of membrane proteins PsbA, PsbB, PsbC, PsbD, PsbE, PsbF, PsbH, PsbI, PsbJ, PsbK, PsbL, PsbM, PsbT, PsbX, PsbY, PsbZ, Psb30/Ycf12, at least 3 peripheral proteins of the oxygen-evolving complex and a large number of cofactors. It forms dimeric complexes. It depends on Binds multiple chlorophylls and provides some of the ligands for the Ca-4Mn-5O cluster of the oxygen-evolving complex. It may also provide a ligand for a Cl- that is required for oxygen evolution. PSII binds additional chlorophylls, carotenoids and specific lipids. as a cofactor.

It is found in the plastid. It localises to the chloroplast thylakoid membrane. Functionally, one of the components of the core complex of photosystem II (PSII). It binds chlorophyll and helps catalyze the primary light-induced photochemical processes of PSII. PSII is a light-driven water:plastoquinone oxidoreductase, using light energy to abstract electrons from H(2)O, generating O(2) and a proton gradient subsequently used for ATP formation. This is Photosystem II CP43 reaction center protein from Cycas taitungensis (Prince sago).